The chain runs to 98 residues: Co-chaperonin GroES (98 aa).

Belongs to the GroES chaperonin family. In terms of assembly, heptamer of 7 subunits arranged in a ring. Interacts with the chaperonin GroEL.

Its subcellular location is the cytoplasm. Its function is as follows. Together with the chaperonin GroEL, plays an essential role in assisting protein folding. The GroEL-GroES system forms a nano-cage that allows encapsulation of the non-native substrate proteins and provides a physical environment optimized to promote and accelerate protein folding. GroES binds to the apical surface of the GroEL ring, thereby capping the opening of the GroEL channel. The protein is Co-chaperonin GroES of Beutenbergia cavernae (strain ATCC BAA-8 / DSM 12333 / CCUG 43141 / JCM 11478 / NBRC 16432 / NCIMB 13614 / HKI 0122).